The following is a 2385-amino-acid chain: Neuron navigator 3 (2385 aa).

A disordered region spans residues 17–38 (SKPVHTALPIPNLGTTGSQHCS). Positions 29-38 (LGTTGSQHCS) are enriched in polar residues. The region spanning 77 to 184 (KEDSKIYTDW…LFFSLSRYKQ (108 aa)) is the Calponin-homology (CH) domain. Residues 203–625 (VTHASPPSEA…LPQQQQHSHP (423 aa)) are disordered. Composition is skewed to polar residues over residues 210–243 (SEAS…TSQK), 258–279 (GSSS…FNSI), and 297–316 (KGPQ…STAG). Positions 318–329 (PPASAIPSPSAS) are enriched in low complexity. Residues 335-352 (KSMNVKHSATSTMLTVKQ) show a composition bias toward polar residues. Low complexity-rich tracts occupy residues 353–363 (SSTATSPTPSS) and 427–439 (NSGL…TNSS). Residues 465 to 491 (PKEKEEKNRDKNKVCTEKPVKEEKDQV) show a composition bias toward basic and acidic residues. Over residues 521–535 (IPSSSGIPKPGSKVP) the composition is skewed to low complexity. 3 stretches are compositionally biased toward polar residues: residues 537–548 (VKQTISPGSTAS), 557–567 (TKGSPSQSLSK), and 591–625 (ASPS…HSHP). The stretch at 679–707 (ETRRMRTVKNIADLRQNLEETMSSLRGTQ) forms a coiled coil. Disordered stretches follow at residues 877–1312 (ADSW…SPLF), 1351–1370 (SSSS…TSLH), 1410–1468 (LSES…SAMS), 1650–1778 (GALN…KRQN), 1850–1881 (DRLK…SRQS), and 2360–2385 (SSTQ…ESTL). Low complexity predominate over residues 882–895 (DSSSVSSGLSDTLD). The segment covering 896–925 (NISTDDLNTTSSVSSYSNITVPSRKNTQLR) has biased composition (polar residues). Residues 942–959 (EELKKPEEDFDSHGDAGG) show a composition bias toward basic and acidic residues. Over residues 979–988 (ASLSVSQTGS) the composition is skewed to polar residues. Positions 1014-1026 (GKTDDAKASEKGK) are enriched in basic and acidic residues. 2 stretches are compositionally biased toward low complexity: residues 1074-1092 (GSSA…GSAT) and 1157-1170 (SSTS…SSKS). A compositionally biased stretch (polar residues) spans 1187–1196 (GRSSPVTVNQ). 2 stretches are compositionally biased toward low complexity: residues 1206 to 1226 (VSDS…TSAS) and 1253 to 1263 (GAKAGGKSASA). Over residues 1264-1289 (PNTEGVKSSSVMPSPSTTLARQGSLE) the composition is skewed to polar residues. Positions 1296-1305 (GSMGSAGGLS) are enriched in gly residues. The span at 1436–1445 (NQEEGKEWLR) shows a compositional bias: basic and acidic residues. Over residues 1446–1462 (SHSTGGLQDTGNQSPLV) the composition is skewed to polar residues. 2 positions are modified to phosphoserine: S1459 and S1463. Positions 1562–1653 (AEEKAHSEQI…AQAAIQGALN (92 aa)) form a coiled coil. Low complexity predominate over residues 1672–1689 (SVSSINSATSHSSIGSGN). Over residues 1701–1714 (WVNSRGSELRSSFK) the composition is skewed to polar residues. Positions 1794–1861 (EAEAEIILQL…LKAETGNTAK (68 aa)) form a coiled coil. Low complexity predominate over residues 1867 to 1881 (SESSSSTSSSSSRQS).

Belongs to the Nav/unc-53 family. As to expression, highly expressed in brain. Expressed at low levels in heart and placenta. Present in activated T-cells but not in resting T-cells (at protein level). Down-regulated in primary neuroblastoma.

The protein localises to the nucleus outer membrane. In terms of biological role, plays a role in cell migration. May be involved in neuron regeneration. May regulate IL2 production by T-cells. This Homo sapiens (Human) protein is Neuron navigator 3 (NAV3).